The primary structure comprises 475 residues: UDP-N-acetylmuramate--L-alanine ligase (475 aa).

118–124 (GTHGKTT) is an ATP binding site.

The protein belongs to the MurCDEF family.

The protein resides in the cytoplasm. The enzyme catalyses UDP-N-acetyl-alpha-D-muramate + L-alanine + ATP = UDP-N-acetyl-alpha-D-muramoyl-L-alanine + ADP + phosphate + H(+). Its pathway is cell wall biogenesis; peptidoglycan biosynthesis. Its function is as follows. Cell wall formation. This chain is UDP-N-acetylmuramate--L-alanine ligase, found in Thermosynechococcus vestitus (strain NIES-2133 / IAM M-273 / BP-1).